A 522-amino-acid polypeptide reads, in one-letter code: Gypsy retrotransposon integrase-like protein 1 (522 aa).

An Integrase catalytic domain is found at 135-292 (KVENPWSLVT…TPYFQMFSRN (158 aa)). The residue at position 502 (serine 502) is a Phosphoserine.

The polypeptide is Gypsy retrotransposon integrase-like protein 1 (GIN1) (Pongo abelii (Sumatran orangutan)).